The following is a 41-amino-acid chain: Photosystem I reaction center subunit IX (41 aa).

Residues 7 to 27 (YLSTAPVVATGWFIVTAALLI) traverse the membrane as a helical segment.

Belongs to the PsaJ family.

It is found in the plastid. Its subcellular location is the chloroplast thylakoid membrane. In terms of biological role, may help in the organization of the PsaE and PsaF subunits. This chain is Photosystem I reaction center subunit IX, found in Tetradesmus obliquus (Green alga).